Consider the following 368-residue polypeptide: Chorismate synthase (368 aa).

NADP(+) is bound at residue R46. FMN is bound by residues 124–126 (RAS), G284, 299–303 (KPTPS), and R326.

The protein belongs to the chorismate synthase family. It depends on FMNH2 as a cofactor.

It carries out the reaction 5-O-(1-carboxyvinyl)-3-phosphoshikimate = chorismate + phosphate. It participates in metabolic intermediate biosynthesis; chorismate biosynthesis; chorismate from D-erythrose 4-phosphate and phosphoenolpyruvate: step 7/7. Functionally, catalyzes the anti-1,4-elimination of the C-3 phosphate and the C-6 proR hydrogen from 5-enolpyruvylshikimate-3-phosphate (EPSP) to yield chorismate, which is the branch point compound that serves as the starting substrate for the three terminal pathways of aromatic amino acid biosynthesis. This reaction introduces a second double bond into the aromatic ring system. This chain is Chorismate synthase, found in Pyrobaculum arsenaticum (strain DSM 13514 / JCM 11321 / PZ6).